Consider the following 122-residue polypeptide: Large ribosomal subunit protein uL14 (122 aa).

The protein belongs to the universal ribosomal protein uL14 family. In terms of assembly, part of the 50S ribosomal subunit. Forms a cluster with proteins L3 and L19. In the 70S ribosome, L14 and L19 interact and together make contacts with the 16S rRNA in bridges B5 and B8.

Its function is as follows. Binds to 23S rRNA. Forms part of two intersubunit bridges in the 70S ribosome. This Mycolicibacterium vanbaalenii (strain DSM 7251 / JCM 13017 / BCRC 16820 / KCTC 9966 / NRRL B-24157 / PYR-1) (Mycobacterium vanbaalenii) protein is Large ribosomal subunit protein uL14.